The primary structure comprises 459 residues: Sulfide:quinone oxidoreductase, mitochondrial (459 aa).

A mitochondrion-targeting transit peptide spans 1-24 (MLTLNSTIKSVTGSFQSASMLARF). Residue 35–39 (GGGSA) coordinates FAD. Residues C204 and C383 each act as cysteine persulfide intermediate in the active site.

Belongs to the SQRD family. It depends on FAD as a cofactor.

The protein localises to the mitochondrion. Functionally, catalyzes the oxidation of hydrogen sulfide, with the help of a quinone. The chain is Sulfide:quinone oxidoreductase, mitochondrial (hmt2) from Schizosaccharomyces pombe (strain 972 / ATCC 24843) (Fission yeast).